The primary structure comprises 376 residues: Cytochrome c oxidase subunit 2, mitochondrial (376 aa).

Residues 164-184 (IFFFLVQILVFVLWVLSRALW) form a helical membrane-spanning segment. The Mitochondrial matrix portion of the chain corresponds to 185–204 (CFRSKISPIPQRIVHGTTIE). A helical transmembrane segment spans residues 205-225 (ILWTILPSIILMFIAIPSFTL). The Mitochondrial intermembrane portion of the chain corresponds to 226–376 (LYSMDDVVVD…YGSWVSNQIQ (151 aa)). The Cu cation site is built by His-309, Cys-344, Glu-346, Cys-348, His-352, and Met-355. Residue Glu-346 participates in Mg(2+) binding.

It belongs to the cytochrome c oxidase subunit 2 family. In terms of assembly, component of the cytochrome c oxidase (complex IV, CIV), a multisubunit enzyme composed of a catalytic core of 3 subunits and several supernumerary subunits. The complex exists as a monomer or a dimer and forms supercomplexes (SCs) in the inner mitochondrial membrane with ubiquinol-cytochrome c oxidoreductase (cytochrome b-c1 complex, complex III, CIII). Cu cation serves as cofactor.

The protein resides in the mitochondrion inner membrane. The catalysed reaction is 4 Fe(II)-[cytochrome c] + O2 + 8 H(+)(in) = 4 Fe(III)-[cytochrome c] + 2 H2O + 4 H(+)(out). In terms of biological role, component of the cytochrome c oxidase, the last enzyme in the mitochondrial electron transport chain which drives oxidative phosphorylation. The respiratory chain contains 3 multisubunit complexes succinate dehydrogenase (complex II, CII), ubiquinol-cytochrome c oxidoreductase (cytochrome b-c1 complex, complex III, CIII) and cytochrome c oxidase (complex IV, CIV), that cooperate to transfer electrons derived from NADH and succinate to molecular oxygen, creating an electrochemical gradient over the inner membrane that drives transmembrane transport and the ATP synthase. Cytochrome c oxidase is the component of the respiratory chain that catalyzes the reduction of oxygen to water. Electrons originating from reduced cytochrome c in the intermembrane space (IMS) are transferred via the dinuclear copper A center (CU(A)) of subunit 2 and heme A of subunit 1 to the active site in subunit 1, a binuclear center (BNC) formed by heme A3 and copper B (CU(B)). The BNC reduces molecular oxygen to 2 water molecules using 4 electrons from cytochrome c in the IMS and 4 protons from the mitochondrial matrix. The polypeptide is Cytochrome c oxidase subunit 2, mitochondrial (COX2) (Vigna unguiculata (Cowpea)).